The sequence spans 131 residues: Large ribosomal subunit protein uL24 (131 aa).

It belongs to the universal ribosomal protein uL24 family. As to quaternary structure, part of the 50S ribosomal subunit.

Functionally, one of two assembly initiator proteins, it binds directly to the 5'-end of the 23S rRNA, where it nucleates assembly of the 50S subunit. Its function is as follows. Located at the polypeptide exit tunnel on the outside of the subunit. The sequence is that of Large ribosomal subunit protein uL24 from Korarchaeum cryptofilum (strain OPF8).